The sequence spans 135 residues: DNA-directed RNA polymerase subunit omega (135 aa).

The tract at residues 84–106 is disordered; it reads IAGHSSHVSPSRSSRHTGLGKSF.

The protein belongs to the RNA polymerase subunit omega family. In terms of assembly, the RNAP catalytic core consists of 2 alpha, 1 beta, 1 beta' and 1 omega subunit. When a sigma factor is associated with the core the holoenzyme is formed, which can initiate transcription.

It carries out the reaction RNA(n) + a ribonucleoside 5'-triphosphate = RNA(n+1) + diphosphate. Its function is as follows. Promotes RNA polymerase assembly. Latches the N- and C-terminal regions of the beta' subunit thereby facilitating its interaction with the beta and alpha subunits. The protein is DNA-directed RNA polymerase subunit omega of Anaplasma phagocytophilum (strain HZ).